The sequence spans 709 residues: MSKQVFEMIFAGKKLVVETGQVAKQANGSVVVRYGDSTVLTAAVMSKKMSTGDFFPLQVNYEEKMYAAGKFPGGFNKREGRPSTDATLTARLIDRPIRPMFAEGFRNEVQVINTVLSFDENASAPMAAMFGSSLALSISDIPFNGPIAGVQVAYVDGNFIINPTAQEQEASALELTVAGTKEAINMVESGAKELSEEIMLEALLKGHEAVCELIAFQEEIVTAIGKEKAEVELLQVDPELQAEIIATHNIALQAAVQVEEKKAREAATEAVKEVVIGEYEARYAEHEEYDRIMRDVAEILEQMEHAEVRRLITEDKIRPDGRRVDEIRPLDAEIDFLPQVHGSGLFTRGQTQALSVLTLAPMGEAQIIDGLTPEYKKRFMHHYNFPQYSVGETGRYGAAGRREIGHGALGERALEQVLPRLEEFPYAIRLVAEVLESNGSSSQASICAGTLALMAGGVPIKAPVAGIAMGLISDGTNYTVLTDIQGLEDHFGDMDFKVAGTREGITALQMDIKIEGITPQILEEALAQAKKARFEILDVLHGAIAEPRPQLAPTAPKIDMIKIDVDKIKVVIGKGGETIDKIIAETGVKIDIDEEGNVSIFSSDQAAIDRTKDIIASLVREAKVGEVYHAKVVRIEKFGAFVNLFDKTDALVHISEIAWTRTANVADVLEIGEEVDVKVIKIDDKGRVDASMKALLPRPPKADNPKKES.

Mg(2+)-binding residues include Asp489 and Asp495. A KH domain is found at 556–615 (PKIDMIKIDVDKIKVVIGKGGETIDKIIAETGVKIDIDEEGNVSIFSSDQAAIDRTKDII). The S1 motif domain occupies 625–693 (GEVYHAKVVR…DKGRVDASMK (69 aa)).

The protein belongs to the polyribonucleotide nucleotidyltransferase family. It depends on Mg(2+) as a cofactor.

The protein localises to the cytoplasm. The catalysed reaction is RNA(n+1) + phosphate = RNA(n) + a ribonucleoside 5'-diphosphate. In terms of biological role, involved in mRNA degradation. Catalyzes the phosphorolysis of single-stranded polyribonucleotides processively in the 3'- to 5'-direction. This chain is Polyribonucleotide nucleotidyltransferase, found in Streptococcus agalactiae serotype V (strain ATCC BAA-611 / 2603 V/R).